Here is a 386-residue protein sequence, read N- to C-terminus: GTPase Obg (386 aa).

Residues 4 to 162 (SNFVDYVKIY…MTVILELKLL (159 aa)) form the Obg domain. A disordered region spans residues 18 to 45 (KGGRGSTHMRREKYTPNGGPDGGDGGRG). Over residues 36–45 (GPDGGDGGRG) the composition is skewed to gly residues. Residues 163–329 (ADVGLVGFPN…LKDILWTELN (167 aa)) enclose the OBG-type G domain. GTP-binding positions include 169-176 (GFPNAGKS), 194-198 (FTTLE), 216-219 (DIPG), 283-286 (TKSD), and 310-312 (SSV). Mg(2+) is bound by residues Ser176 and Thr196. The disordered stretch occupies residues 351–386 (ELKDMGEDEELDYEYEDDGDEDDLDYEYEEEDWEDK). Residues 356-386 (GEDEELDYEYEDDGDEDDLDYEYEEEDWEDK) are compositionally biased toward acidic residues.

Belongs to the TRAFAC class OBG-HflX-like GTPase superfamily. OBG GTPase family. Monomer. It depends on Mg(2+) as a cofactor.

The protein localises to the cytoplasm. An essential GTPase which binds GTP, GDP and possibly (p)ppGpp with moderate affinity, with high nucleotide exchange rates and a fairly low GTP hydrolysis rate. Plays a role in control of the cell cycle, stress response, ribosome biogenesis and in those bacteria that undergo differentiation, in morphogenesis control. The protein is GTPase Obg of Bacteroides fragilis (strain YCH46).